The chain runs to 228 residues: Sodium channel regulatory subunit beta-4 (228 aa).

A signal peptide spans 1 to 30; that stretch reads MPGAGDGGKAPARWLGTGLLGLFLLPVTLS. In terms of domain architecture, Ig-like C2-type spans 31–148; it reads LEVSVGKATD…NNLQHHATIF (118 aa). The Extracellular segment spans residues 31–162; it reads LEVSVGKATD…DRLEEVDNTV (132 aa). N45, N71, and N113 each carry an N-linked (GlcNAc...) asparagine glycan. An intrachain disulfide couples C53 to C131. Residues 163 to 183 form a helical membrane-spanning segment; that stretch reads TLIILAVVGGVIGLLILILLI. The Cytoplasmic portion of the chain corresponds to 184-228; that stretch reads KKLIIFILKKTREKKKECLVSSSGNDNTENGLPGSKAEEKPPSKV. A disordered region spans residues 200 to 228; the sequence is ECLVSSSGNDNTENGLPGSKAEEKPPSKV. Residues 203 to 213 show a composition bias toward polar residues; the sequence is VSSSGNDNTEN. Residues 219-228 show a composition bias toward basic and acidic residues; it reads KAEEKPPSKV.

Belongs to the sodium channel auxiliary subunit SCN4B (TC 8.A.17) family. A voltage-gated sodium (Nav) channel consists of an ion-conducting pore-forming alpha subunit functional on its own that is regulated by one or more beta subunits. The beta subunit SCN4B is disulfide-linked to the pore-forming alpha subunit. Interacts with SCN1A; regulatory subunit of SCN1A/Nav1.1. Interacts with SCN2A; regulatory subunit of SCN2A/Nav1.2. Contains an interchain disulfide bond with SCN2A. In terms of processing, N-glycosylated. In terms of tissue distribution, expressed at a high level in dorsal root ganglia, at a lower level in brain, spinal cord, skeletal muscle and heart. Expressed in the atrium.

The protein localises to the cell membrane. In terms of biological role, regulatory subunit of multiple voltage-gated sodium (Nav) channels directly mediating the depolarization of excitable membranes. Navs, also called VGSCs (voltage-gated sodium channels) or VDSCs (voltage-dependent sodium channels), operate by switching between closed and open conformations depending on the voltage difference across the membrane. In the open conformation they allow Na(+) ions to selectively pass through the pore, along their electrochemical gradient. The influx of Na+ ions provokes membrane depolarization, initiating the propagation of electrical signals throughout cells and tissues. The accessory beta subunits participate in localization and functional modulation of the Nav channels. Modulates the activity of SCN1A/Nav1.1. Modulates the activity of SCN2A/Nav1.2. This chain is Sodium channel regulatory subunit beta-4, found in Homo sapiens (Human).